Reading from the N-terminus, the 349-residue chain is MLKLVCAVFLIATVSAKGYDTGSRYSIGNYLSGYSGYGIGNRYSIGNYLSGYNGYDRGSRYSIGNYLPGYSGYGTGSRYSIGNYLPGYSGYGTGSRYSIGNYLPEYSGYGTGNRYSIGNYLPEYSGYGIGSRYSIGNYLPGYSGYGTGNRYSIGNYLPEYSGYGTSSRYSIGNYLSGYSGYGTGSRYSIGNYLSGYSRYGTGSRYSIGSYLSRYSGYGTGSRYSIGNYLSGYSGYGIGNRYSIGNYLPGYSGYYGGSYPSYRSTLTGVSQSLSFGRAVMSGQAFGAGVPAFGSVNFGNFGVGTGGIGILGGGVIGGGGVIGGGGVVGGGAVIGGGGGIPIGGIIRKKKY.

Positions Met1–Ala16 are cleaved as a signal peptide.

As to expression, prismatic layer of shell (at protein level).

It localises to the secreted. The protein is Shematrin-like protein 1 of Margaritifera margaritifera (Freshwater pearl mussel).